A 150-amino-acid chain; its full sequence is UPF0178 protein Bcen2424_1660 (150 aa).

The protein belongs to the UPF0178 family.

The chain is UPF0178 protein Bcen2424_1660 from Burkholderia cenocepacia (strain HI2424).